The chain runs to 494 residues: Glutamate--tRNA ligase (494 aa).

A 'HIGH' region motif is present at residues 15–25 (PSPTGNPHVGL). Zn(2+) is bound by residues cysteine 112, cysteine 114, cysteine 139, and glutamate 141. A 'KMSKS' region motif is present at residues 260–264 (KLSKR). Residue lysine 263 coordinates ATP.

This sequence belongs to the class-I aminoacyl-tRNA synthetase family. Glutamate--tRNA ligase type 1 subfamily. Monomer. It depends on Zn(2+) as a cofactor.

It localises to the cytoplasm. The catalysed reaction is tRNA(Glu) + L-glutamate + ATP = L-glutamyl-tRNA(Glu) + AMP + diphosphate. Its function is as follows. Catalyzes the attachment of glutamate to tRNA(Glu) in a two-step reaction: glutamate is first activated by ATP to form Glu-AMP and then transferred to the acceptor end of tRNA(Glu). This Streptomyces coelicolor (strain ATCC BAA-471 / A3(2) / M145) protein is Glutamate--tRNA ligase.